The chain runs to 146 residues: Vascular endothelial growth factor A (146 aa).

Residues 1–26 (MNFLLSWVHWSLALLLYLHHAKWSQA) form the signal peptide. Cystine bridges form between Cys51–Cys93, Cys82–Cys127, and Cys86–Cys129. N-linked (GlcNAc...) asparagine glycosylation occurs at Asn100.

It belongs to the PDGF/VEGF growth factor family. As to quaternary structure, homodimer; disulfide-linked. Also found as heterodimer with PGF. Interacts with NRP1. Interacts with isoform 2 of BSG. Interacts with CD82; this interaction inhibits VEGFA-mediated signaling pathway.

Growth factor active in angiogenesis, vasculogenesis and endothelial cell growth. Induces endothelial cell proliferation, promotes cell migration, inhibits apoptosis and induces permeabilization of blood vessels. Binds to the FLT1/VEGFR1 and KDR/VEGFR2 receptors, heparan sulfate and heparin. Binding to NRP1 receptor initiates a signaling pathway needed for motor neuron axon guidance and cell body migration, including for the caudal migration of facial motor neurons from rhombomere 4 to rhombomere 6 during embryonic development. Also binds the DEAR/FBXW7-AS1 receptor. In Ovis aries (Sheep), this protein is Vascular endothelial growth factor A (VEGFA).